The chain runs to 462 residues: tRNA-2-methylthio-N(6)-dimethylallyladenosine synthase (462 aa).

Residues arginine 18–serine 138 form the MTTase N-terminal domain. Residues cysteine 27, cysteine 63, cysteine 101, cysteine 179, cysteine 183, and cysteine 186 each coordinate [4Fe-4S] cluster. Residues arginine 165–alanine 397 enclose the Radical SAM core domain. Positions aspartate 400 to alanine 462 constitute a TRAM domain.

It belongs to the methylthiotransferase family. MiaB subfamily. In terms of assembly, monomer. Requires [4Fe-4S] cluster as cofactor.

It localises to the cytoplasm. The enzyme catalyses N(6)-dimethylallyladenosine(37) in tRNA + (sulfur carrier)-SH + AH2 + 2 S-adenosyl-L-methionine = 2-methylsulfanyl-N(6)-dimethylallyladenosine(37) in tRNA + (sulfur carrier)-H + 5'-deoxyadenosine + L-methionine + A + S-adenosyl-L-homocysteine + 2 H(+). Catalyzes the methylthiolation of N6-(dimethylallyl)adenosine (i(6)A), leading to the formation of 2-methylthio-N6-(dimethylallyl)adenosine (ms(2)i(6)A) at position 37 in tRNAs that read codons beginning with uridine. In Brucella anthropi (strain ATCC 49188 / DSM 6882 / CCUG 24695 / JCM 21032 / LMG 3331 / NBRC 15819 / NCTC 12168 / Alc 37) (Ochrobactrum anthropi), this protein is tRNA-2-methylthio-N(6)-dimethylallyladenosine synthase.